We begin with the raw amino-acid sequence, 349 residues long: Isopentenyl-diphosphate delta-isomerase (349 aa).

6–7 (RK) is a substrate binding site. FMN is bound by residues 62–64 (AMT), serine 93, and asparagine 122. A substrate-binding site is contributed by glutamine 152. Glutamate 153 contributes to the Mg(2+) binding site. Residues lysine 184, threonine 214, 258-259 (GG), and 280-281 (AG) contribute to the FMN site.

It belongs to the IPP isomerase type 2 family. In terms of assembly, homooctamer. Dimer of tetramers. FMN is required as a cofactor. NADPH serves as cofactor. The cofactor is Mg(2+).

It localises to the cytoplasm. It carries out the reaction isopentenyl diphosphate = dimethylallyl diphosphate. Involved in the biosynthesis of isoprenoids. Catalyzes the 1,3-allylic rearrangement of the homoallylic substrate isopentenyl (IPP) to its allylic isomer, dimethylallyl diphosphate (DMAPP). The chain is Isopentenyl-diphosphate delta-isomerase from Bacillus cereus (strain ATCC 10987 / NRS 248).